Consider the following 278-residue polypeptide: Odontogenic ameloblast-associated protein (278 aa).

The signal sequence occupies residues 1 to 15; that stretch reads MKIIILLGLIGATSS. Positions 103–124 are disordered; that stretch reads GGQAGQPDFSQQQTPSQTQQAS. Low complexity predominate over residues 107–124; the sequence is GQPDFSQQQTPSQTQQAS. Residues T116 and T120 are each glycosylated (O-linked (GalNAc...) threonine). The tract at residues 126 to 128 is interaction with ARHGEF5; it reads MSY. The segment at 230–278 is disordered; sequence GFKQDNVGVSTPSTSPKPDTGNFFTSEINPTIAPLLPEQKVNADSLREP. The span at 236–258 shows a compositional bias: polar residues; the sequence is VGVSTPSTSPKPDTGNFFTSEIN. 4 O-linked (GalNAc...) threonine glycosylation sites follow: T240, T243, T249, and T254.

It belongs to the ODAM family. Interacts (via C-terminus) with ARHGEF5. Post-translationally, O-glycosylated. Highly expressed in tooth-associated epithelia. In tooth, it is only detected in the ameloblast layer of the enamel organ, starting at post-secretory transition and extending throughout the maturation stage. Also detected in epithelial cells of the gingiva which bind it to the tooth surface (junctional epithelium) (at protein level). Predominantly expressed in mandible, but also expressed at weak level in nasal and salivary glands, and at much lower level in epididymis.

It localises to the secreted. Its subcellular location is the cytoplasm. The protein resides in the nucleus. Functionally, tooth-associated epithelia protein that probably plays a role in odontogenesis, the complex process that results in the initiation and generation of the tooth. May be incorporated in the enamel matrix at the end of mineralization process. Involved in the induction of RHOA activity via interaction with ARHGEF and expression of downstream factors such as ROCK. Plays a role in attachment of the junctional epithelium to the tooth surface. This Rattus norvegicus (Rat) protein is Odontogenic ameloblast-associated protein (Odam).